We begin with the raw amino-acid sequence, 248 residues long: 2,3-bisphosphoglycerate-dependent phosphoglycerate mutase (248 aa).

Substrate-binding positions include 8 to 15 (RHGESTWN), 21 to 22 (TG), R60, 87 to 90 (ERHY), K98, and 114 to 115 (RR). Catalysis depends on H9, which acts as the Tele-phosphohistidine intermediate. E87 serves as the catalytic Proton donor/acceptor. The interval 117–137 (YDTPPPALEPTDPRASYDDPR) is disordered. The segment covering 127-137 (TDPRASYDDPR) has biased composition (basic and acidic residues). 183–184 (GN) is a substrate binding site.

It belongs to the phosphoglycerate mutase family. BPG-dependent PGAM subfamily. In terms of assembly, homodimer.

The enzyme catalyses (2R)-2-phosphoglycerate = (2R)-3-phosphoglycerate. It functions in the pathway carbohydrate degradation; glycolysis; pyruvate from D-glyceraldehyde 3-phosphate: step 3/5. Functionally, catalyzes the interconversion of 2-phosphoglycerate and 3-phosphoglycerate. This Cupriavidus taiwanensis (strain DSM 17343 / BCRC 17206 / CCUG 44338 / CIP 107171 / LMG 19424 / R1) (Ralstonia taiwanensis (strain LMG 19424)) protein is 2,3-bisphosphoglycerate-dependent phosphoglycerate mutase.